Here is a 320-residue protein sequence, read N- to C-terminus: MHTKNLFYSRPQQITQYLSAFLMMVILTRTSISSAYPLFAQQGYENPREATGRIVCANCHLANKPVNIEVPQVILPDTVFEAVVQIPYDLQLKQVLSNGKKGGLNVGAVLILPEGFELAPPDRISPELKEKIGKLYFQSYRPNIKNIFVVGPVPGQKYKKITFPILSPNPATNRRAHFLKYPIYVGGNRGRGQIYPDGSKSNNTVFNATASGRVKKIIRNEKGGYEIIIKDGSDSNEVVNLLPPGLEPLVSEGDSIKLDQPLTSNPNVGGFGQDVAEVVLQDPSRVQVLLFFFASIILAQIFLVLKKKQFEKVQLTKINL.

Residues 1-35 form the signal peptide; it reads MHTKNLFYSRPQQITQYLSAFLMMVILTRTSISSA. Residues Y36, C56, C59, and H60 each coordinate heme. A helical transmembrane segment spans residues 286 to 306; sequence VQVLLFFFASIILAQIFLVLK.

Belongs to the cytochrome f family. In terms of assembly, the 4 large subunits of the cytochrome b6-f complex are cytochrome b6, subunit IV (17 kDa polypeptide, petD), cytochrome f and the Rieske protein, while the 4 small subunits are PetG, PetL, PetM and PetN. The complex functions as a dimer. Heme serves as cofactor.

It localises to the plastid thylakoid membrane. Its function is as follows. Component of the cytochrome b6-f complex, which mediates electron transfer between photosystem II (PSII) and photosystem I (PSI), cyclic electron flow around PSI, and state transitions. This chain is Cytochrome f, found in Cuscuta obtusiflora (Peruvian dodder).